The sequence spans 232 residues: MAIDLLSTFIKPMHREGTKFVAIFAVVTLVLFLIWEPLGWIGVGLTVWCYYFFRDPVRVTPTREGLIVSPADGVVSLIEPAVPPAELGMGPAPMTRVSVFMSVFDCHVNRAPIGGTVTAVAYRPGKFLNASLDKASEDNERNALAIRLADGRQIAVVQIAGLVARRILCEVREGTPLLTGERFGMIRFGSRLDVYLPEGVQPLVCLGQVMTSGETVLADLTSPEARRTGAAR.

Ser-190 functions as the Schiff-base intermediate with substrate; via pyruvic acid in the catalytic mechanism. The residue at position 190 (Ser-190) is a Pyruvic acid (Ser); by autocatalysis.

Belongs to the phosphatidylserine decarboxylase family. PSD-A subfamily. In terms of assembly, heterodimer of a large membrane-associated beta subunit and a small pyruvoyl-containing alpha subunit. Requires pyruvate as cofactor. Post-translationally, is synthesized initially as an inactive proenzyme. Formation of the active enzyme involves a self-maturation process in which the active site pyruvoyl group is generated from an internal serine residue via an autocatalytic post-translational modification. Two non-identical subunits are generated from the proenzyme in this reaction, and the pyruvate is formed at the N-terminus of the alpha chain, which is derived from the carboxyl end of the proenzyme. The post-translation cleavage follows an unusual pathway, termed non-hydrolytic serinolysis, in which the side chain hydroxyl group of the serine supplies its oxygen atom to form the C-terminus of the beta chain, while the remainder of the serine residue undergoes an oxidative deamination to produce ammonia and the pyruvoyl prosthetic group on the alpha chain.

It localises to the cell membrane. It catalyses the reaction a 1,2-diacyl-sn-glycero-3-phospho-L-serine + H(+) = a 1,2-diacyl-sn-glycero-3-phosphoethanolamine + CO2. It functions in the pathway phospholipid metabolism; phosphatidylethanolamine biosynthesis; phosphatidylethanolamine from CDP-diacylglycerol: step 2/2. In terms of biological role, catalyzes the formation of phosphatidylethanolamine (PtdEtn) from phosphatidylserine (PtdSer). The protein is Phosphatidylserine decarboxylase proenzyme of Cereibacter sphaeroides (strain KD131 / KCTC 12085) (Rhodobacter sphaeroides).